We begin with the raw amino-acid sequence, 1104 residues long: Carbamoyl phosphate synthase large chain (1104 aa).

The segment at 1–402 (MPRRTDLKSV…ALQKALRSTE (402 aa)) is carboxyphosphate synthetic domain. R129, R169, G175, G176, E208, I210, E215, G241, V242, H243, Q285, and E299 together coordinate ATP. Residues 133-328 (KGVVERCGAE…IAKIAARLAV (196 aa)) enclose the ATP-grasp 1 domain. Positions 285, 299, and 301 each coordinate Mg(2+). 3 residues coordinate Mn(2+): Q285, E299, and N301. Residues 403–547 (KRGATFSWAG…YSSYDEEDET (145 aa)) are oligomerization domain. Residues 548 to 948 (RPREKAAIVI…AFGKSQTAAY (401 aa)) are carbamoyl phosphate synthetic domain. The ATP-grasp 2 domain occupies 676–867 (GQVLERAGLV…LAKAAARLMA (192 aa)). 10 residues coordinate ATP: R712, R751, L753, E758, G783, I784, H785, S786, Q826, and E838. Positions 826, 838, and 840 each coordinate Mg(2+). Q826, E838, and N840 together coordinate Mn(2+). One can recognise an MGS-like domain in the interval 949–1099 (GGLPTAGTAF…QEHTARLNAA (151 aa)). The tract at residues 949-1104 (GGLPTAGTAF…RLNAAWEGRA (156 aa)) is allosteric domain.

It belongs to the CarB family. In terms of assembly, composed of two chains; the small (or glutamine) chain promotes the hydrolysis of glutamine to ammonia, which is used by the large (or ammonia) chain to synthesize carbamoyl phosphate. Tetramer of heterodimers (alpha,beta)4. It depends on Mg(2+) as a cofactor. Requires Mn(2+) as cofactor.

It carries out the reaction hydrogencarbonate + L-glutamine + 2 ATP + H2O = carbamoyl phosphate + L-glutamate + 2 ADP + phosphate + 2 H(+). The catalysed reaction is hydrogencarbonate + NH4(+) + 2 ATP = carbamoyl phosphate + 2 ADP + phosphate + 2 H(+). Its pathway is amino-acid biosynthesis; L-arginine biosynthesis; carbamoyl phosphate from bicarbonate: step 1/1. It functions in the pathway pyrimidine metabolism; UMP biosynthesis via de novo pathway; (S)-dihydroorotate from bicarbonate: step 1/3. In terms of biological role, large subunit of the glutamine-dependent carbamoyl phosphate synthetase (CPSase). CPSase catalyzes the formation of carbamoyl phosphate from the ammonia moiety of glutamine, carbonate, and phosphate donated by ATP, constituting the first step of 2 biosynthetic pathways, one leading to arginine and/or urea and the other to pyrimidine nucleotides. The large subunit (synthetase) binds the substrates ammonia (free or transferred from glutamine from the small subunit), hydrogencarbonate and ATP and carries out an ATP-coupled ligase reaction, activating hydrogencarbonate by forming carboxy phosphate which reacts with ammonia to form carbamoyl phosphate. This Kineococcus radiotolerans (strain ATCC BAA-149 / DSM 14245 / SRS30216) protein is Carbamoyl phosphate synthase large chain.